The chain runs to 255 residues: Syntaxin-6 (255 aa).

The residue at position 2 (Ser-2) is an N-acetylserine. Ser-2 carries the post-translational modification Phosphoserine. The tract at residues 2–168 (SMEDPFFVVK…QAQQQLIVEQ (167 aa)) is required for interaction with VPS51. The Cytoplasmic portion of the chain corresponds to 2–234 (SMEDPFFVVK…VSHMTSDRRQ (233 aa)). The stretch at 41-74 (EEIDWTTNELRNNLRSIEWDLEDLDETISIVEAN) forms a coiled coil. A phosphoserine mark is found at Ser-129 and Ser-152. The t-SNARE coiled-coil homology domain occupies 163 to 225 (QLIVEQQDEQ…DNVMKKLAKV (63 aa)). Residues 235–255 (WCAIAILFAVLLVVLILFLVL) traverse the membrane as a helical; Anchor for type IV membrane protein segment.

This sequence belongs to the syntaxin family. As to quaternary structure, identified in a complex containing STX6, STX12, VAMP4 and VTI1A. Binds EEA1. Interacts with VPS45A. Interacts with MARCHF2; the interaction promotes MARCHF2-mediated ubiquitination and degradation of CFTR. Interacts with MARCHF3. Interacts with GOPC. Interacts with BLTP3B (via C-terminal coiled-coil domain). Interacts with BAIAP3; this interaction is increased in the presence of calcium. Interacts with VPS13B.

The protein localises to the golgi apparatus membrane. It localises to the golgi apparatus. It is found in the trans-Golgi network membrane. The protein resides in the recycling endosome membrane. Its function is as follows. SNARE promoting movement of transport vesicles to target membranes. Targets endosomes to the trans-Golgi network, and may therefore function in retrograde trafficking. Together with SNARE STX12, promotes movement of vesicles from endosomes to the cell membrane, and may therefore function in the endocytic recycling pathway. This chain is Syntaxin-6 (STX6), found in Homo sapiens (Human).